A 273-amino-acid polypeptide reads, in one-letter code: Dermonecrotic toxin LdSicTox-alphaIB3aiv (273 aa).

Residue histidine 5 is part of the active site. The Mg(2+) site is built by glutamate 25 and aspartate 27. The Nucleophile role is filled by histidine 41. Cystine bridges form between cysteine 45–cysteine 51 and cysteine 47–cysteine 190. Aspartate 85 is a Mg(2+) binding site.

It belongs to the arthropod phospholipase D family. Class II subfamily. Mg(2+) is required as a cofactor. Expressed by the venom gland.

Its subcellular location is the secreted. It carries out the reaction an N-(acyl)-sphingosylphosphocholine = an N-(acyl)-sphingosyl-1,3-cyclic phosphate + choline. The catalysed reaction is an N-(acyl)-sphingosylphosphoethanolamine = an N-(acyl)-sphingosyl-1,3-cyclic phosphate + ethanolamine. The enzyme catalyses a 1-acyl-sn-glycero-3-phosphocholine = a 1-acyl-sn-glycero-2,3-cyclic phosphate + choline. It catalyses the reaction a 1-acyl-sn-glycero-3-phosphoethanolamine = a 1-acyl-sn-glycero-2,3-cyclic phosphate + ethanolamine. In terms of biological role, dermonecrotic toxins cleave the phosphodiester linkage between the phosphate and headgroup of certain phospholipids (sphingolipid and lysolipid substrates), forming an alcohol (often choline) and a cyclic phosphate. This toxin acts on sphingomyelin (SM). It may also act on ceramide phosphoethanolamine (CPE), lysophosphatidylcholine (LPC) and lysophosphatidylethanolamine (LPE), but not on lysophosphatidylserine (LPS), and lysophosphatidylglycerol (LPG). It acts by transphosphatidylation, releasing exclusively cyclic phosphate products as second products. Induces dermonecrosis, hemolysis, increased vascular permeability, edema, inflammatory response, and platelet aggregation. The polypeptide is Dermonecrotic toxin LdSicTox-alphaIB3aiv (Loxosceles deserta (Desert recluse spider)).